Consider the following 135-residue polypeptide: Large ribosomal subunit protein uL16c (135 aa).

Over residues 1-23 (MLSPKKTKFRKEHRGRMKGRSSR) the composition is skewed to basic residues. The tract at residues 1–24 (MLSPKKTKFRKEHRGRMKGRSSRG) is disordered.

Belongs to the universal ribosomal protein uL16 family. Part of the 50S ribosomal subunit.

It is found in the plastid. The protein resides in the chloroplast. In Pelargonium hortorum (Common geranium), this protein is Large ribosomal subunit protein uL16c.